Reading from the N-terminus, the 90-residue chain is Probable small nuclear ribonucleoprotein E (90 aa).

The region spanning 14 to 89 (VNLIFRYLQN…ITLIHAAQQE (76 aa)) is the Sm domain.

The protein belongs to the snRNP Sm proteins family. As to quaternary structure, core component of the spliceosomal U1, U2, U4 and U5 small nuclear ribonucleoproteins (snRNPs), the building blocks of the spliceosome.

The protein resides in the nucleus. It is found in the cytoplasm. It localises to the cytosol. In terms of biological role, plays a role in pre-mRNA splicing as a core component of the spliceosomal U1, U2, U4 and U5 small nuclear ribonucleoproteins (snRNPs), the building blocks of the spliceosome. The protein is Probable small nuclear ribonucleoprotein E (snr-6) of Caenorhabditis elegans.